The chain runs to 53 residues: Photosystem II reaction center protein K (53 aa).

Positions 1 to 16 are excised as a propeptide; sequence MLKFYLENVFHLIFFA. Residues 28–48 form a helical membrane-spanning segment; sequence IVNVMPIIPLFFFLLAFVWQA.

Belongs to the PsbK family. In terms of assembly, PSII is composed of 1 copy each of membrane proteins PsbA, PsbB, PsbC, PsbD, PsbE, PsbF, PsbH, PsbI, PsbJ, PsbK, PsbL, PsbM, PsbT, PsbX, PsbY, PsbZ, Psb30/Ycf12, at least 3 peripheral proteins of the oxygen-evolving complex and a large number of cofactors. It forms dimeric complexes.

It is found in the plastid. Its subcellular location is the chloroplast thylakoid membrane. Functionally, one of the components of the core complex of photosystem II (PSII). PSII is a light-driven water:plastoquinone oxidoreductase that uses light energy to abstract electrons from H(2)O, generating O(2) and a proton gradient subsequently used for ATP formation. It consists of a core antenna complex that captures photons, and an electron transfer chain that converts photonic excitation into a charge separation. The sequence is that of Photosystem II reaction center protein K from Huperzia lucidula (Shining clubmoss).